The primary structure comprises 1485 residues: Chromosome partition protein MukB (1485 aa).

34 to 41 (GGNGAGKS) is an ATP binding site. Coiled-coil stretches lie at residues 337–480 (LNLV…QAYQ), 509–605 (QHLA…PVWL), 780–805 (RAARENRLETLYQERDRLAERYATLS), 835–915 (EAEI…IQQH), 977–1116 (GMLT…AKAG), and 1210–1235 (EAIEQMEIELGRLTEELTAREQKLAI). The flexible hinge stretch occupies residues 666–783 (PSGAEDARLI…EVPLFGRAAR (118 aa)).

It belongs to the SMC family. MukB subfamily. In terms of assembly, homodimerization via its hinge domain. Binds to DNA via its C-terminal region. Interacts, and probably forms a ternary complex, with MukE and MukF via its C-terminal region. The complex formation is stimulated by calcium or magnesium. Interacts with tubulin-related protein FtsZ.

The protein localises to the cytoplasm. The protein resides in the nucleoid. Plays a central role in chromosome condensation, segregation and cell cycle progression. Functions as a homodimer, which is essential for chromosome partition. Involved in negative DNA supercoiling in vivo, and by this means organize and compact chromosomes. May achieve or facilitate chromosome segregation by condensation DNA from both sides of a centrally located replisome during cell division. The sequence is that of Chromosome partition protein MukB from Yersinia pseudotuberculosis serotype O:1b (strain IP 31758).